The primary structure comprises 3313 residues: Cadherin EGF LAG seven-pass G-type receptor 3 (3313 aa).

Positions 1-31 are cleaved as a signal peptide; the sequence is MARRPLWWGLPGPSTPLLLLLLFSLFPSSRE. Topologically, residues 32–2538 are extracellular; that stretch reads EMGGGGDQGW…RLEGDLELLA (2507 aa). 2 disordered regions span residues 148-187 and 205-269; these read LPLDALSPGDSDLRNSSPHPSELLAQPDSPRPVAFQRNGR and EPGH…RMRS. The segment covering 258 to 268 has biased composition (basic and acidic residues); the sequence is HESRTAPERMR. Cadherin domains are found at residues 317-424, 425-536, 537-642, 643-747, 748-849, 850-952, 953-1058, 1059-1160, and 1161-1257; these read PQYN…APVF, EQAQ…APQF, SEKR…SPIF, VSTP…RPEF, TMKE…RPVF, QSAH…APQF, VASH…APVF, PAEE…SPVL, and NNFQ…VVII. Asn-623 carries N-linked (GlcNAc...) asparagine glycosylation. A glycan (N-linked (GlcNAc...) asparagine) is linked at Asn-838. Residues Asn-1173, Asn-1213, Asn-1308, and Asn-1318 are each glycosylated (N-linked (GlcNAc...) asparagine). In terms of domain architecture, EGF-like 1; calcium-binding spans 1366 to 1424; the sequence is DDNVCLREPCENYMKCVSVLRFDSSAPFLASASTLFRPIQPIAGLRCRCPPGFTGDFCE. 9 cysteine pairs are disulfide-bonded: Cys-1370–Cys-1381, Cys-1375–Cys-1412, Cys-1414–Cys-1423, Cys-1430–Cys-1441, Cys-1435–Cys-1450, Cys-1452–Cys-1461, Cys-1470–Cys-1481, Cys-1475–Cys-1491, and Cys-1493–Cys-1504. In terms of domain architecture, EGF-like 2; calcium-binding spans 1426–1462; it reads ELDLCYSNPCRNGGACARREGGYTCVCRPRFTGEDCE. The 40-residue stretch at 1466–1505 folds into the EGF-like 3; calcium-binding domain; that stretch reads EAGRCVPGVCRNGGTCTNAPNGGFRCQCPAGGAFEGPRCE. Positions 1506-1710 constitute a Laminin G-like 1 domain; the sequence is VAARSFPPSS…VANNGTTAGC (205 aa). N-linked (GlcNAc...) asparagine glycans are attached at residues Asn-1640 and Asn-1704. 4 disulfide bridges follow: Cys-1684–Cys-1710, Cys-1717–Cys-1728, Cys-1722–Cys-1737, and Cys-1739–Cys-1748. One can recognise an EGF-like 4; calcium-binding domain in the interval 1713–1749; it reads KSHFCASGPCKNGGLCSERWGGFSCDCPVGFGGKDCR. The 183-residue stretch at 1753–1935 folds into the Laminin G-like 2 domain; the sequence is AHPYHFQGNG…SHRINVEPGC (183 aa). Asn-1761 carries N-linked (GlcNAc...) asparagine glycosylation. 9 disulfide bridges follow: Cys-1906–Cys-1935, Cys-1941–Cys-1952, Cys-1946–Cys-1961, Cys-1963–Cys-1972, Cys-1976–Cys-1987, Cys-1981–Cys-1999, Cys-2001–Cys-2010, Cys-2018–Cys-2031, and Cys-2033–Cys-2043. The EGF-like 5; calcium-binding domain maps to 1937-1972; that stretch reads VTNPCASGPCPPHANCKDLWQTFSCTCWPGYYGPGC. Asp-1954 carries the post-translational modification (3R)-3-hydroxyaspartate. In terms of domain architecture, EGF-like 6; calcium-binding spans 1973 to 2011; the sequence is VDACLLNPCQNQGSCRHLQGGPHGYTCDCASGYFGQHCE. In terms of domain architecture, EGF-like 7; calcium-binding spans 2012 to 2044; that stretch reads HRMDQQCPRGWWGSPTCGPCNCDVHKGFDPNCN. Asn-2044 carries an N-linked (GlcNAc...) asparagine glycan. The region spanning 2046–2081 is the EGF-like 8; calcium-binding domain; sequence TSGQCHCKEFHYRPRGSDSCLPCDCYPVGSTSRSCA. 5 disulfide bridges follow: Cys-2050/Cys-2065, Cys-2052/Cys-2068, Cys-2070/Cys-2080, Cys-2089/Cys-2098, and Cys-2101/Cys-2113. In terms of domain architecture, Laminin EGF-like spans 2068–2115; it reads CDCYPVGSTSRSCAPHSGQCPCRPGALGRQCNSCDSPFAEVTASGCRV. Tyr-2117 carries the post-translational modification Phosphotyrosine. N-linked (GlcNAc...) asparagine glycans are attached at residues Asn-2173, Asn-2192, Asn-2382, Asn-2472, and Asn-2504. The segment at 2356-2395 is disordered; the sequence is HTHVLLPSQSPQPSPSEVLPTSSNAENATASGVVSPPAPL. The GAIN-B domain occupies 2364 to 2528; it reads QSPQPSPSEV…GVLMDASPRE (165 aa). Residues 2374-2387 show a composition bias toward polar residues; the sequence is LPTSSNAENATASG. 2 cysteine pairs are disulfide-bonded: Cys-2478–Cys-2510 and Cys-2498–Cys-2512. Residues 2478-2528 are GPS; the sequence is CVQWDPPGPADQHGMWTARDCELVHRNGSHARCRCSRTGTFGVLMDASPRE. A helical membrane pass occupies residues 2539 to 2559; sequence VFTHVVVAASVTALVLTAAVL. The Cytoplasmic segment spans residues 2560-2570; the sequence is LSLRSLKSNVR. Residues 2571 to 2591 form a helical membrane-spanning segment; the sequence is GIHANVAAALGVAELLFLLGI. Over 2592–2599 the chain is Extracellular; it reads HRTHNQLL. A helical transmembrane segment spans residues 2600-2620; the sequence is CTVVAILLHYFFLSTFAWLLV. Topologically, residues 2621-2641 are cytoplasmic; sequence QGLHLYRMQVEPRNVDRGAMR. A helical transmembrane segment spans residues 2642–2662; it reads FYHALGWGVPAVLLGLAVGLD. The Extracellular portion of the chain corresponds to 2663–2679; it reads PEGYGNPDFCWISIHEP. A helical membrane pass occupies residues 2680–2700; sequence LIWSFAGPIVLVIVMNGIMFL. At 2701–2724 the chain is on the cytoplasmic side; the sequence is LAARTSCSTGQREAKKTSVLRTLR. A helical transmembrane segment spans residues 2725–2745; the sequence is SSFLLLLLVSASWLFGLLAVN. Residues 2746–2752 lie on the Extracellular side of the membrane; sequence HSVLAFH. A helical transmembrane segment spans residues 2753–2773; the sequence is YLHAGLCGLQGLAVLLLFCVL. Over 2774-3313 the chain is Cytoplasmic; it reads NADARAAWTP…SEVPRSEGHS (540 aa). Disordered regions lie at residues 2887 to 2927 and 2977 to 3004; these read AGAD…RPLR and SNKDAANNNQPELALTSGDETSLGRAQR. Over residues 2889 to 2899 the composition is skewed to acidic residues; sequence ADSDSDSDLSL. Residues 2918-2927 show a composition bias toward basic residues; it reads TRGRFQRPLR. Tyr-3050 carries the phosphotyrosine modification. Disordered stretches follow at residues 3091 to 3242 and 3255 to 3313; these read APVL…PSTE and NSSA…EGHS. Phosphoserine is present on Ser-3098. Over residues 3102 to 3119 the composition is skewed to basic and acidic residues; it reads SQERLDTAPARLEPRDRG. Composition is skewed to low complexity over residues 3178–3197 and 3255–3289; these read QRPLSRDPLLPSRPLDSLSR and NSSALSSVQSSSTPSGPHTTATPSATASALGPSTP. Residues 3290-3301 are compositionally biased toward polar residues; that stretch reads RSATSHSISELS.

The protein belongs to the G-protein coupled receptor 2 family. LN-TM7 subfamily. Post-translationally, the iron and 2-oxoglutarate dependent 3-hydroxylation of aspartate and asparagine is (R) stereospecific within EGF domains. Expressed in the brain. Expressed in cerebellum, olfactory bulb, cerebral cortex, hippocampus and brain stem.

It localises to the cell membrane. Functionally, receptor that may have an important role in cell/cell signaling during nervous system formation. This is Cadherin EGF LAG seven-pass G-type receptor 3 (Celsr3) from Rattus norvegicus (Rat).